A 159-amino-acid chain; its full sequence is Ribosomal RNA large subunit methyltransferase H (159 aa).

S-adenosyl-L-methionine contacts are provided by residues leucine 76, glycine 108, and 127 to 132; that span reads FGRLTL.

The protein belongs to the RNA methyltransferase RlmH family. In terms of assembly, homodimer.

The protein resides in the cytoplasm. The enzyme catalyses pseudouridine(1915) in 23S rRNA + S-adenosyl-L-methionine = N(3)-methylpseudouridine(1915) in 23S rRNA + S-adenosyl-L-homocysteine + H(+). Specifically methylates the pseudouridine at position 1915 (m3Psi1915) in 23S rRNA. This is Ribosomal RNA large subunit methyltransferase H from Streptococcus pneumoniae (strain 70585).